The sequence spans 107 residues: MPRAARKQQKNLIQNIAVQRMWRLFERAKVELPENPERSRHYVQLIRNISMRNRISIPREIKSRICKHCYSFLTPGYNARYRLNEGFVVITCEHCGKEMRYPYKKLK.

Residues C66, C69, C92, and C95 each coordinate Zn(2+).

Belongs to the eukaryotic/archaeal RNase P protein component 4 family. As to quaternary structure, consists of a catalytic RNA component and at least 4-5 protein subunits. Zn(2+) is required as a cofactor.

It is found in the cytoplasm. The enzyme catalyses Endonucleolytic cleavage of RNA, removing 5'-extranucleotides from tRNA precursor.. Functionally, part of ribonuclease P, a protein complex that generates mature tRNA molecules by cleaving their 5'-ends. This is Ribonuclease P protein component 4 from Methanosarcina mazei (strain ATCC BAA-159 / DSM 3647 / Goe1 / Go1 / JCM 11833 / OCM 88) (Methanosarcina frisia).